The chain runs to 784 residues: E3 UFM1-protein ligase 1 homolog (784 aa).

The disordered stretch occupies residues serine 405 to alanine 480. Positions lysine 444–alanine 454 are enriched in basic residues.

Belongs to the UFL1 family.

E3 UFM1-protein ligase that mediates ufmylation of target proteins. This Drosophila yakuba (Fruit fly) protein is E3 UFM1-protein ligase 1 homolog.